A 228-amino-acid chain; its full sequence is Interleukin-27 subunit beta (228 aa).

A signal peptide spans 1–18 (MSKLLFLSLALWASRSPG). Fibronectin type-III domains follow at residues 26-124 (ALSQ…VAER) and 127-224 (KPDP…VESA). 2 N-linked (GlcNAc...) asparagine glycosylation sites follow: Asn-54 and Asn-104.

The protein belongs to the type I cytokine receptor family. Type 3 subfamily. As to quaternary structure, heterodimer with IL27/IL27A; not disulfide-linked. This heterodimer is known as interleukin IL-27. Heterodimer with IL12A; not disulfide-linked. This heterodimer is known as interleukin IL-35. Interacts with SQSTM1.

It localises to the secreted. Its function is as follows. Associates with IL27 to form the IL-27 interleukin, a heterodimeric cytokine which functions in innate immunity. IL-27 has pro- and anti-inflammatory properties, that can regulate T-helper cell development, suppress T-cell proliferation, stimulate cytotoxic T-cell activity, induce isotype switching in B-cells, and that has diverse effects on innate immune cells. Among its target cells are CD4 T-helper cells which can differentiate in type 1 effector cells (TH1), type 2 effector cells (TH2) and IL17 producing helper T-cells (TH17). It drives rapid clonal expansion of naive but not memory CD4 T-cells. It also strongly synergizes with IL-12 to trigger interferon-gamma/IFN-gamma production of naive CD4 T-cells, binds to the cytokine receptor WSX-1/TCCR. Another important role of IL-27 is its antitumor activity as well as its antiangiogenic activity with activation of production of antiangiogenic chemokines. The chain is Interleukin-27 subunit beta (Ebi3) from Mus musculus (Mouse).